Here is a 355-residue protein sequence, read N- to C-terminus: NADH-quinone oxidoreductase subunit H (355 aa).

Helical transmembrane passes span 25 to 45, 91 to 111, 126 to 146, 170 to 190, 205 to 225, 253 to 273, 290 to 310, and 330 to 350; these read VVRI…LILW, WLYL…WAVI, LLYA…AGWA, MGFA…SEIV, FLSW…ISGI, MAFA…SALA, FIPG…VFIW, and VFLP…MSPL.

It belongs to the complex I subunit 1 family. As to quaternary structure, NDH-1 is composed of 14 different subunits. Subunits NuoA, H, J, K, L, M, N constitute the membrane sector of the complex.

It localises to the cell inner membrane. It carries out the reaction a quinone + NADH + 5 H(+)(in) = a quinol + NAD(+) + 4 H(+)(out). NDH-1 shuttles electrons from NADH, via FMN and iron-sulfur (Fe-S) centers, to quinones in the respiratory chain. The immediate electron acceptor for the enzyme in this species is believed to be ubiquinone. Couples the redox reaction to proton translocation (for every two electrons transferred, four hydrogen ions are translocated across the cytoplasmic membrane), and thus conserves the redox energy in a proton gradient. This subunit may bind ubiquinone. In Burkholderia cenocepacia (strain ATCC BAA-245 / DSM 16553 / LMG 16656 / NCTC 13227 / J2315 / CF5610) (Burkholderia cepacia (strain J2315)), this protein is NADH-quinone oxidoreductase subunit H.